The chain runs to 592 residues: Aspartate--tRNA(Asp/Asn) ligase (592 aa).

Glu-171 lines the L-aspartate pocket. The interval 195 to 198 (QLFK) is aspartate. An L-aspartate-binding site is contributed by Arg-217. ATP is bound by residues 217–219 (RDE) and Gln-226. Residue His-447 participates in L-aspartate binding. Residue Glu-481 participates in ATP binding. Residue Arg-488 coordinates L-aspartate. 533-536 (GLDR) lines the ATP pocket.

Belongs to the class-II aminoacyl-tRNA synthetase family. Type 1 subfamily. As to quaternary structure, homodimer.

It localises to the cytoplasm. The catalysed reaction is tRNA(Asx) + L-aspartate + ATP = L-aspartyl-tRNA(Asx) + AMP + diphosphate. In terms of biological role, aspartyl-tRNA synthetase with relaxed tRNA specificity since it is able to aspartylate not only its cognate tRNA(Asp) but also tRNA(Asn). Reaction proceeds in two steps: L-aspartate is first activated by ATP to form Asp-AMP and then transferred to the acceptor end of tRNA(Asp/Asn). The chain is Aspartate--tRNA(Asp/Asn) ligase from Psychromonas ingrahamii (strain DSM 17664 / CCUG 51855 / 37).